Reading from the N-terminus, the 327-residue chain is MSRMHEEVELEKSVRRLREKFHGLIEIDTAVLLMRRYVKNHRMVAMWIALMADNDRELDEEDQAALNNDPVAKNVIMKLKAEEQQQEEKHAKSSSSGSSGAGPSAKAKKQPSDDRDITELGTRLRVLPLTMENKRMFDQAQANQIPSDTHQFACESCDRDWWRRVPQRKRVSRCHRCKKKNDPVPPDRMWGIAEFTCPNCTRNFKGFGRMDGRSPCYGCRSAIYPMKILPPRRKNMMPGPKQRNQHSCFAEDCYHRMEPHVPGTECVHPHSRQKNRKPRVVYPSPAHISSGSTVNTCLSQGSLIESINELILDDIEEESEDDSDSSS.

The segment covering 82-91 (EEQQQEEKHA) has biased composition (basic and acidic residues). Positions 82-121 (EEQQQEEKHAKSSSSGSSGAGPSAKAKKQPSDDRDITELG) are disordered. Residues 93–105 (SSSSGSSGAGPSA) show a composition bias toward low complexity. Residues 163-179 (RRVPQRKRVSRCHRCKK) carry the Nuclear localization signal motif. Positions 304-312 (IESINELIL) match the Nuclear export signal motif.

It belongs to the SHFL family.

The protein resides in the cytoplasm. The protein localises to the nucleus. It localises to the P-body. Inhibits programmed -1 ribosomal frameshifting (-1PRF) of a variety of mRNAs from viruses and cellular genes. Interacts with the -1PRF signal of target mRNA and translating ribosomes and causes premature translation termination at the frameshifting site. May exhibit antiviral activity. In Danio rerio (Zebrafish), this protein is Shiftless antiviral inhibitor of ribosomal frameshifting protein homolog (shfl).